We begin with the raw amino-acid sequence, 346 residues long: Protein RecA (346 aa).

Position 79 to 86 (Gly-79 to Thr-86) interacts with ATP.

It belongs to the RecA family.

The protein localises to the cytoplasm. In terms of biological role, can catalyze the hydrolysis of ATP in the presence of single-stranded DNA, the ATP-dependent uptake of single-stranded DNA by duplex DNA, and the ATP-dependent hybridization of homologous single-stranded DNAs. It interacts with LexA causing its activation and leading to its autocatalytic cleavage. In Chlorobaculum tepidum (strain ATCC 49652 / DSM 12025 / NBRC 103806 / TLS) (Chlorobium tepidum), this protein is Protein RecA.